The primary structure comprises 83 residues: Protein L83L (83 aa).

A compositionally biased stretch (polar residues) spans 1–10 (MDTSLKNNDG). The tract at residues 1-25 (MDTSLKNNDGASEADNKNYQDYKDE) is disordered. The segment covering 14 to 25 (ADNKNYQDYKDE) has biased composition (basic and acidic residues).

The protein belongs to the asfivirus L83L family. Interacts with host IL1B.

The protein localises to the host cytoplasm. In terms of biological role, may subvert the host innate immune response by interacting with host IL1B and interfering with its function. This is Protein L83L from Ornithodoros (relapsing fever ticks).